A 581-amino-acid chain; its full sequence is Arginine--tRNA ligase (581 aa).

Positions 126–136 (PNLAKEMHVGH) match the 'HIGH' region motif.

The protein belongs to the class-I aminoacyl-tRNA synthetase family. As to quaternary structure, monomer.

It localises to the cytoplasm. It catalyses the reaction tRNA(Arg) + L-arginine + ATP = L-arginyl-tRNA(Arg) + AMP + diphosphate. This chain is Arginine--tRNA ligase, found in Shewanella pealeana (strain ATCC 700345 / ANG-SQ1).